The sequence spans 141 residues: Putative inactive deoxyuridine 5'-triphosphate nucleotidohydrolase-like protein FLJ16323 (141 aa).

The protein belongs to the dUTPase family.

The polypeptide is Putative inactive deoxyuridine 5'-triphosphate nucleotidohydrolase-like protein FLJ16323 (Homo sapiens (Human)).